The primary structure comprises 306 residues: Sulfate adenylyltransferase subunit 2 (306 aa).

Belongs to the PAPS reductase family. CysD subfamily. As to quaternary structure, heterodimer composed of CysD, the smaller subunit, and CysN.

It carries out the reaction sulfate + ATP + H(+) = adenosine 5'-phosphosulfate + diphosphate. Its pathway is sulfur metabolism; hydrogen sulfide biosynthesis; sulfite from sulfate: step 1/3. Its function is as follows. With CysN forms the ATP sulfurylase (ATPS) that catalyzes the adenylation of sulfate producing adenosine 5'-phosphosulfate (APS) and diphosphate, the first enzymatic step in sulfur assimilation pathway. APS synthesis involves the formation of a high-energy phosphoric-sulfuric acid anhydride bond driven by GTP hydrolysis by CysN coupled to ATP hydrolysis by CysD. The protein is Sulfate adenylyltransferase subunit 2 of Brucella anthropi (strain ATCC 49188 / DSM 6882 / CCUG 24695 / JCM 21032 / LMG 3331 / NBRC 15819 / NCTC 12168 / Alc 37) (Ochrobactrum anthropi).